We begin with the raw amino-acid sequence, 184 residues long: Probable maltose O-acetyltransferase (184 aa).

An acetyl-CoA-binding site is contributed by Asn84. Residue His114 is the Proton donor/acceptor of the active site. Acetyl-CoA contacts are provided by residues Gly141, Ser159, 164-165, Arg179, and Lys182; that span reads TK.

Belongs to the transferase hexapeptide repeat family. Homodimer.

It catalyses the reaction D-maltose + acetyl-CoA = 1-O-acetylmaltose + CoA. In terms of biological role, catalyzes the CoA-dependent transfer of an acetyl group to maltose and other sugars. Acetylates glucose exclusively at the C6 position and maltose at the C6 position of the non-reducing end glucosyl moiety. Is able to acetylate maltooligosaccharides. The sequence is that of Probable maltose O-acetyltransferase (maa) from Bacillus subtilis (strain 168).